The following is a 348-amino-acid chain: Dihydroorotase (348 aa).

Zn(2+) contacts are provided by His14 and His16. Substrate-binding positions include 16 to 18 (HLR) and Asn42. 3 residues coordinate Zn(2+): Lys100, His137, and His175. Lys100 is subject to N6-carboxylysine. Residue His137 coordinates substrate. Position 220 (Leu220) interacts with substrate. Asp248 contacts Zn(2+). Asp248 is an active-site residue. His252 and Ala264 together coordinate substrate.

The protein belongs to the metallo-dependent hydrolases superfamily. DHOase family. Class II DHOase subfamily. In terms of assembly, homodimer. It depends on Zn(2+) as a cofactor.

The enzyme catalyses (S)-dihydroorotate + H2O = N-carbamoyl-L-aspartate + H(+). Its pathway is pyrimidine metabolism; UMP biosynthesis via de novo pathway; (S)-dihydroorotate from bicarbonate: step 3/3. In terms of biological role, catalyzes the reversible cyclization of carbamoyl aspartate to dihydroorotate. The chain is Dihydroorotase from Pseudomonas fluorescens (strain Pf0-1).